The chain runs to 413 residues: Imidazolonepropionase (413 aa).

Fe(3+) contacts are provided by histidine 79 and histidine 81. Zn(2+) is bound by residues histidine 79 and histidine 81. Positions 88, 151, and 184 each coordinate 4-imidazolone-5-propanoate. Residue tyrosine 151 participates in N-formimidoyl-L-glutamate binding. Histidine 248 is a Fe(3+) binding site. Histidine 248 contacts Zn(2+). Glutamate 251 lines the 4-imidazolone-5-propanoate pocket. Aspartate 322 contributes to the Fe(3+) binding site. Residue aspartate 322 participates in Zn(2+) binding. Residues asparagine 324 and glycine 326 each contribute to the N-formimidoyl-L-glutamate site. A 4-imidazolone-5-propanoate-binding site is contributed by serine 327.

This sequence belongs to the metallo-dependent hydrolases superfamily. HutI family. It depends on Zn(2+) as a cofactor. Fe(3+) is required as a cofactor.

The protein resides in the cytoplasm. It catalyses the reaction 4-imidazolone-5-propanoate + H2O = N-formimidoyl-L-glutamate. It functions in the pathway amino-acid degradation; L-histidine degradation into L-glutamate; N-formimidoyl-L-glutamate from L-histidine: step 3/3. Its function is as follows. Catalyzes the hydrolytic cleavage of the carbon-nitrogen bond in imidazolone-5-propanoate to yield N-formimidoyl-L-glutamate. It is the third step in the universal histidine degradation pathway. In Fusobacterium nucleatum subsp. nucleatum (strain ATCC 25586 / DSM 15643 / BCRC 10681 / CIP 101130 / JCM 8532 / KCTC 2640 / LMG 13131 / VPI 4355), this protein is Imidazolonepropionase.